Here is a 289-residue protein sequence, read N- to C-terminus: MPSLKDLKNRIGSVKNTRKITKAMQMVAAAKLRRAQEAAEAARPFAERMTAVMTGLAGSVGSSESAPRLLAGTGSDKVQLLVVMTAERGLCGGFNSSIVRLARAHAAKLLAEGKTVKILTVGKKGREQLRRDLGQHFIGHVDLSEVKRMGYPVAQGIARDVLDRFDKGEFDVATIFFARFQSVISQIPTAQQVIPAVFEGEGEVNSLYDYEPSEEGVLADLLPRGVATQIFTALLENGASEQGARMSAMDNATRNAGDMINRLTIQYNRSRQAAITKELIEIISGAEAL.

It belongs to the ATPase gamma chain family. F-type ATPases have 2 components, CF(1) - the catalytic core - and CF(0) - the membrane proton channel. CF(1) has five subunits: alpha(3), beta(3), gamma(1), delta(1), epsilon(1). CF(0) has three main subunits: a, b and c.

The protein localises to the cell inner membrane. Functionally, produces ATP from ADP in the presence of a proton gradient across the membrane. The gamma chain is believed to be important in regulating ATPase activity and the flow of protons through the CF(0) complex. The chain is ATP synthase gamma chain from Cereibacter sphaeroides (strain ATCC 17025 / ATH 2.4.3) (Rhodobacter sphaeroides).